The sequence spans 278 residues: Pantothenate synthetase (278 aa).

Residue 31–38 coordinates ATP; that stretch reads MGALHEGH. The active-site Proton donor is the His38. Gln62 contributes to the (R)-pantoate binding site. Gln62 is a beta-alanine binding site. ATP is bound at residue 148–151; sequence GEKD. Gln154 contributes to the (R)-pantoate binding site. ATP-binding positions include Leu177 and 185 to 188; that span reads MSSR.

Belongs to the pantothenate synthetase family. Homodimer.

The protein localises to the cytoplasm. It catalyses the reaction (R)-pantoate + beta-alanine + ATP = (R)-pantothenate + AMP + diphosphate + H(+). The protein operates within cofactor biosynthesis; (R)-pantothenate biosynthesis; (R)-pantothenate from (R)-pantoate and beta-alanine: step 1/1. In terms of biological role, catalyzes the condensation of pantoate with beta-alanine in an ATP-dependent reaction via a pantoyl-adenylate intermediate. This is Pantothenate synthetase from Acidiphilium cryptum (strain JF-5).